The chain runs to 76 residues: DNA-directed RNA polymerase subunit epsilon (76 aa).

This sequence belongs to the RNA polymerase subunit epsilon family. RNAP is composed of a core of 2 alpha, a beta and a beta' subunit. The core is associated with a delta subunit, and at least one of epsilon or omega. When a sigma factor is associated with the core the holoenzyme is formed, which can initiate transcription.

It catalyses the reaction RNA(n) + a ribonucleoside 5'-triphosphate = RNA(n+1) + diphosphate. Its function is as follows. A non-essential component of RNA polymerase (RNAP). The chain is DNA-directed RNA polymerase subunit epsilon from Streptococcus gordonii (strain Challis / ATCC 35105 / BCRC 15272 / CH1 / DL1 / V288).